Consider the following 243-residue polypeptide: Peptide deformylase, mitochondrial (243 aa).

The transit peptide at Met1–Val39 directs the protein to the mitochondrion. Residues Gly71, Pro169, and Gly171 each contribute to the substrate site. The hydrophobic dimerization interface stretch occupies residues Leu165–Val175. Cys172 and His214 together coordinate Co(2+). The active site involves Glu215. Residue His218 participates in Co(2+) binding.

The protein belongs to the polypeptide deformylase family. As to quaternary structure, homodimer. Co(2+) serves as cofactor. In terms of tissue distribution, ubiquitous.

It localises to the mitochondrion. It carries out the reaction N-terminal N-formyl-L-methionyl-[peptide] + H2O = N-terminal L-methionyl-[peptide] + formate. In terms of biological role, removes the formyl group from the N-terminal Met of newly synthesized proteins. The protein is Peptide deformylase, mitochondrial of Homo sapiens (Human).